The chain runs to 342 residues: Apurinic-apyrimidinic endonuclease 1 (342 aa).

8 residues coordinate Zn(2+): His61, Glu136, Asp170, His173, His207, Asp220, His222, and Glu252. Residues 299–310 are compositionally biased toward basic and acidic residues; sequence HLNKFEKKEAKK. Residues 299 to 342 are disordered; it reads HLNKFEKKEAKKDRKKKSKDGDQTTLLLRKKQKLGNAEVKSLDE.

Belongs to the AP endonuclease 2 family. Zn(2+) serves as cofactor.

The protein localises to the nucleus. Functionally, DNA repair enzyme that cleaves apurinic/apyrimidinic (AP) sites and removes 3'-blocking groups present at single strand breaks of damaged DNA. Provides back-up AP endonuclease (APE) activity to apn2 together with uve1. In Schizosaccharomyces pombe (strain 972 / ATCC 24843) (Fission yeast), this protein is Apurinic-apyrimidinic endonuclease 1 (apn1).